Reading from the N-terminus, the 760-residue chain is Complement C2 (760 aa).

A signal peptide spans 1–18 (MAPLLALFYLLQLGPGLA). 3 Sushi domains span residues 20 to 90 (LFCN…AVCK), 92 to 151 (VRCL…VCDN), and 154 to 212 (SHCP…ICRQ). Disulfide bonds link Cys22/Cys62, Cys49/Cys89, Cys94/Cys136, Cys122/Cys149, Cys156/Cys197, and Cys182/Cys210. N-linked (GlcNAc...) asparagine glycosylation is found at Asn27 and Asn32. Asn117 carries an N-linked (GlcNAc...) asparagine glycan. Positions 261–459 (NLYLLLDASQ…KALQQIFEHM (199 aa)) constitute a VWFA domain. Positions 267 to 271 (DASQS) match the MIDAS-like motif motif. Residues Ser269 and Ser271 each contribute to the Mg(2+) site. 2 N-linked (GlcNAc...) asparagine glycosylation sites follow: Asn297 and Asn340. Thr344 contributes to the Mg(2+) binding site. 5 disulfide bridges follow: Cys470/Cys590, Cys499/Cys515, Cys593/Cys609, Cys647/Cys674, and Cys685/Cys715. The Peptidase S1 domain occupies 471–752 (GVGNMSANAS…LQPWLRQHLD (282 aa)). Residues Asn474 and Asn478 are each glycosylated (N-linked (GlcNAc...) asparagine). Catalysis depends on charge relay system residues His514 and Asp570. N-linked (GlcNAc...) asparagine glycosylation occurs at Asn663. Ser689 (charge relay system) is an active-site residue.

The protein belongs to the peptidase S1 family. As to quaternary structure, serine protease component of the C3 convertase, also named C4bC2b, composed of the serine protease complement C2b and complement C4b. Serine protease component of the C5 convertase, also named C4bC2bC3b, composed of the serine protease complement C2b, complement C3b, as well as complement C4b. Mg(2+) serves as cofactor. It depends on Mn(2+) as a cofactor. Post-translationally, cleaved and activated by different proteases depending on the complement pathway to generate complement C2a and serine protease complement C2b chains. Cleaved and activated by C1S following activation by the classical complement system. Cleaved and activated by MASP2 following activation by the lectin complement system. Cleaved and activated by GZMK following activation by the GZMK complement system.

Its subcellular location is the secreted. The protein resides in the cell surface. It carries out the reaction Selective cleavage of Arg-|-Ser bond in complement component C3 alpha-chain to form C3a and C3b, and Arg-|-Xaa bond in complement component C5 alpha-chain to form C5a and C5b.. Precursor of the catalytic component of the C3 and C5 convertase complexes, which are part of the complement pathway, a cascade of proteins that leads to phagocytosis and breakdown of pathogens and signaling that strengthens the adaptive immune system. Component C2 is part of the classical, lectin and GZMK complement systems. Functionally, catalytic component of the complement C3 and C5 convertase complexes. Following complement activation, recruited to the surface of pathogens by complement C4b opsonin to form the C3 convertase, or C3b and C4b opsonins to form the C5 convertase. As part of the C3 convertase, cleaves and activate C3 into C3a anaphylatoxin and C3b opsonin, the next components of the complement pathways. As part of the C5 convertase, cleaves and activate C5 into C5a anaphylatoxin and C5b component of the membrane attack complex. The chain is Complement C2 from Mus musculus (Mouse).